The chain runs to 422 residues: L-2-hydroxyglutarate dehydrogenase (422 aa).

Belongs to the L2HGDH family. It depends on FAD as a cofactor.

It is found in the cell inner membrane. It carries out the reaction (S)-2-hydroxyglutarate + a quinone = a quinol + 2-oxoglutarate. Its pathway is amino-acid degradation. Functionally, catalyzes the dehydrogenation of L-2-hydroxyglutarate (L2HG) to alpha-ketoglutarate and couples to the respiratory chain by feeding electrons from the reaction into the membrane quinone pool. Functions in a L-lysine degradation pathway that proceeds via cadaverine, glutarate and L-2-hydroxyglutarate. This is L-2-hydroxyglutarate dehydrogenase from Escherichia coli (strain K12).